The sequence spans 164 residues: HTH-type transcriptional regulator PapX (164 aa).

Residues 25 to 159 form the HTH marR-type domain; sequence EHLLMQLCIR…FEVISKKLLA (135 aa).

It localises to the cytoplasm. The protein is HTH-type transcriptional regulator PapX (papX) of Escherichia coli.